The following is a 349-amino-acid chain: Protein BCCIP homolog (349 aa).

Residues 1–10 (MGRVFKKKGG) are compositionally biased toward basic residues. The interval 1–65 (MGRVFKKKGG…DDEEEDEDEQ (65 aa)) is disordered. The span at 11–33 (AKREAEEEKQEELVMRKKLRKEE) shows a compositional bias: basic and acidic residues. A compositionally biased stretch (acidic residues) spans 34–65 (EPEPVEDVEEDEDVSDEDDEDIDDEEEDEDEQ).

Belongs to the BCP1 family.

In Caenorhabditis elegans, this protein is Protein BCCIP homolog.